Reading from the N-terminus, the 101-residue chain is RNA-binding protein Hfq (101 aa).

A Sm domain is found at 9 to 68 (DPFLNALRRERVPVSIYLVNGIKLQGQVESFDQFVILLKNTVSQMVYKHAISTVVPSRPV). The disordered stretch occupies residues 63-101 (VPSRPVSHHSNTPSGSTNNYHGSNPSAPQQPQQDSDDAE). The span at 70 to 86 (HHSNTPSGSTNNYHGSN) shows a compositional bias: polar residues.

This sequence belongs to the Hfq family. Homohexamer.

In terms of biological role, RNA chaperone that binds small regulatory RNA (sRNAs) and mRNAs to facilitate mRNA translational regulation in response to envelope stress, environmental stress and changes in metabolite concentrations. Also binds with high specificity to tRNAs. This is RNA-binding protein Hfq from Yersinia pseudotuberculosis serotype O:1b (strain IP 31758).